The primary structure comprises 414 residues: D-mannose isomerase (414 aa).

Catalysis depends on proton donor/acceptor residues H255 and H390.

It belongs to the N-acylglucosamine 2-epimerase family. Monomer.

The catalysed reaction is D-mannose = D-fructose. Strongly inhibited by Ag(2+), Cu(2+) and cetyltrimethyl ammonium bromide (CTAB). Its function is as follows. Catalyzes the reversible isomerization of D-mannose to D-fructose. Shows high specific activity towards mannose and fructose, and has no detectable activity towards other monosaccharides and disaccharides. This Pseudomonas cannabina pv. alisalensis protein is D-mannose isomerase.